The primary structure comprises 140 residues: Nucleoside diphosphate kinase (140 aa).

Positions 11, 59, 87, 93, 104, and 114 each coordinate ATP. His-117 serves as the catalytic Pros-phosphohistidine intermediate.

It belongs to the NDK family. As to quaternary structure, homotetramer. The cofactor is Mg(2+).

It localises to the cytoplasm. The catalysed reaction is a 2'-deoxyribonucleoside 5'-diphosphate + ATP = a 2'-deoxyribonucleoside 5'-triphosphate + ADP. It catalyses the reaction a ribonucleoside 5'-diphosphate + ATP = a ribonucleoside 5'-triphosphate + ADP. Its function is as follows. Major role in the synthesis of nucleoside triphosphates other than ATP. The ATP gamma phosphate is transferred to the NDP beta phosphate via a ping-pong mechanism, using a phosphorylated active-site intermediate. The sequence is that of Nucleoside diphosphate kinase from Sinorhizobium medicae (strain WSM419) (Ensifer medicae).